The primary structure comprises 346 residues: S-adenosylmethionine:tRNA ribosyltransferase-isomerase (346 aa).

This sequence belongs to the QueA family. As to quaternary structure, monomer.

It localises to the cytoplasm. It catalyses the reaction 7-aminomethyl-7-carbaguanosine(34) in tRNA + S-adenosyl-L-methionine = epoxyqueuosine(34) in tRNA + adenine + L-methionine + 2 H(+). Its pathway is tRNA modification; tRNA-queuosine biosynthesis. Functionally, transfers and isomerizes the ribose moiety from AdoMet to the 7-aminomethyl group of 7-deazaguanine (preQ1-tRNA) to give epoxyqueuosine (oQ-tRNA). The polypeptide is S-adenosylmethionine:tRNA ribosyltransferase-isomerase (Neisseria gonorrhoeae (strain ATCC 700825 / FA 1090)).